Reading from the N-terminus, the 227-residue chain is Lipoprotein-releasing system ATP-binding protein LolD (227 aa).

In terms of domain architecture, ABC transporter spans 7–227 (LSCRDLGKSY…HLQEGHLVAI (221 aa)). 43 to 50 (GTSGSGKS) provides a ligand contact to ATP.

Belongs to the ABC transporter superfamily. Lipoprotein translocase (TC 3.A.1.125) family. As to quaternary structure, the complex is composed of two ATP-binding proteins (LolD) and two transmembrane proteins (LolC and LolE).

It is found in the cell inner membrane. Its function is as follows. Part of the ABC transporter complex LolCDE involved in the translocation of mature outer membrane-directed lipoproteins, from the inner membrane to the periplasmic chaperone, LolA. Responsible for the formation of the LolA-lipoprotein complex in an ATP-dependent manner. In Pseudomonas fluorescens (strain ATCC BAA-477 / NRRL B-23932 / Pf-5), this protein is Lipoprotein-releasing system ATP-binding protein LolD.